Consider the following 55-residue polypeptide: Protein CADMIUM TOLERANCE 1 (55 aa).

Residues 24–40 (GCLYACIFTALCCFCCY) form a helical membrane-spanning segment.

It belongs to the CYSTM1 family. Expressed in roots and shoots.

The protein localises to the cell membrane. It is found in the secreted. It localises to the cell wall. Its function is as follows. Confers resistance to heavy metal ions (e.g. cadmium (CdCl(2)) and copper (CuCl(2))) by chelating them at the plasma membrane of root cells, thus stopping their entry and reducing their accumulation. Binds to aluminium (Al). In Oryza sativa subsp. japonica (Rice), this protein is Protein CADMIUM TOLERANCE 1.